Reading from the N-terminus, the 157-residue chain is Dihydrofolate reductase type 15 (157 aa).

Residues Lys2–Lys156 form the DHFR domain.

Belongs to the dihydrofolate reductase family. As to quaternary structure, homodimer.

It carries out the reaction (6S)-5,6,7,8-tetrahydrofolate + NADP(+) = 7,8-dihydrofolate + NADPH + H(+). It functions in the pathway cofactor biosynthesis; tetrahydrofolate biosynthesis; 5,6,7,8-tetrahydrofolate from 7,8-dihydrofolate: step 1/1. Functionally, key enzyme in folate metabolism. Catalyzes an essential reaction for de novo glycine and purine synthesis, and for DNA precursor synthesis. The chain is Dihydrofolate reductase type 15 (dhfrXV) from Escherichia coli.